Consider the following 310-residue polypeptide: UPF0324 membrane protein VP0936 (310 aa).

10 helical membrane-spanning segments follow: residues 7 to 29, 44 to 63, 75 to 94, 104 to 126, 133 to 155, 165 to 187, 199 to 218, 228 to 250, 257 to 279, and 289 to 308; these read PFGL…LVIG, IASF…GFGI, GIGL…SLIA, AYLI…APAI, IGLA…PVIG, FGTW…SAYG, LARA…IFSR, LVIP…FPQL, IFTI…ISIS, and LLFG…SWLV.

Belongs to the UPF0324 family.

The protein localises to the cell membrane. The sequence is that of UPF0324 membrane protein VP0936 from Vibrio parahaemolyticus serotype O3:K6 (strain RIMD 2210633).